We begin with the raw amino-acid sequence, 418 residues long: Aspartate aminotransferase 1 (418 aa).

N6-(pyridoxal phosphate)lysine is present on K264.

Belongs to the class-I pyridoxal-phosphate-dependent aminotransferase family. In terms of assembly, homodimer. It depends on pyridoxal 5'-phosphate as a cofactor. In terms of tissue distribution, nodules, roots, stems and leaves, in decreasing order of aspartate aminotransferase 1 concentration. Is the predominant aspartate aminotransferase isoenzyme in roots.

It is found in the cytoplasm. It carries out the reaction L-aspartate + 2-oxoglutarate = oxaloacetate + L-glutamate. Important for the metabolism of amino acids and Krebs-cycle related organic acids. In plants, it is involved in nitrogen metabolism and in aspects of carbon and energy metabolism. In Medicago sativa (Alfalfa), this protein is Aspartate aminotransferase 1 (AAT-1).